A 101-amino-acid polypeptide reads, in one-letter code: Putative pterin-4-alpha-carbinolamine dehydratase (101 aa).

The protein belongs to the pterin-4-alpha-carbinolamine dehydratase family.

The catalysed reaction is (4aS,6R)-4a-hydroxy-L-erythro-5,6,7,8-tetrahydrobiopterin = (6R)-L-erythro-6,7-dihydrobiopterin + H2O. The chain is Putative pterin-4-alpha-carbinolamine dehydratase from Nitrobacter hamburgensis (strain DSM 10229 / NCIMB 13809 / X14).